Consider the following 212-residue polypeptide: Ribosomal RNA large subunit methyltransferase E (212 aa).

Gly56, Trp58, Asp78, Asp94, and Asp117 together coordinate S-adenosyl-L-methionine. Lys157 serves as the catalytic Proton acceptor.

It belongs to the class I-like SAM-binding methyltransferase superfamily. RNA methyltransferase RlmE family.

It localises to the cytoplasm. It catalyses the reaction uridine(2552) in 23S rRNA + S-adenosyl-L-methionine = 2'-O-methyluridine(2552) in 23S rRNA + S-adenosyl-L-homocysteine + H(+). Functionally, specifically methylates the uridine in position 2552 of 23S rRNA at the 2'-O position of the ribose in the fully assembled 50S ribosomal subunit. The polypeptide is Ribosomal RNA large subunit methyltransferase E (Ehrlichia chaffeensis (strain ATCC CRL-10679 / Arkansas)).